Reading from the N-terminus, the 313-residue chain is Iron-sulfur protein required for NADH dehydrogenase, mitochondrial (313 aa).

A mitochondrion-targeting transit peptide spans 1–22 (MATVALLRSLRRRELHAAHISA). 51 to 58 (GKGGVGKS) serves as a coordination point for ATP.

This sequence belongs to the Mrp/NBP35 ATP-binding proteins family. It depends on [4Fe-4S] cluster as a cofactor.

The protein resides in the mitochondrion matrix. Essential during early vegetative growth. Required for the assembly of the mitochondrial membrane respiratory chain NADH dehydrogenase (Complex I). Involved in mitochondrial translation activity. May deliver of one or more Fe-S clusters to complex I subunits. This is Iron-sulfur protein required for NADH dehydrogenase, mitochondrial from Arabidopsis thaliana (Mouse-ear cress).